The sequence spans 488 residues: Ribosomal protein uS12 methylthiotransferase RimO (488 aa).

An MTTase N-terminal domain is found at 4–120 (RKVHFVSLGC…LGRVLAGDAE (117 aa)). 6 residues coordinate [4Fe-4S] cluster: cysteine 13, cysteine 49, cysteine 83, cysteine 155, cysteine 159, and cysteine 162. In terms of domain architecture, Radical SAM core spans 141–377 (STPGGSAYVK…MTLQRRISHK (237 aa)). In terms of domain architecture, TRAM spans 380–448 (AAMIGRELEV…DYDLVGELLD (69 aa)).

It belongs to the methylthiotransferase family. RimO subfamily. The cofactor is [4Fe-4S] cluster.

It localises to the cytoplasm. The catalysed reaction is L-aspartate(89)-[ribosomal protein uS12]-hydrogen + (sulfur carrier)-SH + AH2 + 2 S-adenosyl-L-methionine = 3-methylsulfanyl-L-aspartate(89)-[ribosomal protein uS12]-hydrogen + (sulfur carrier)-H + 5'-deoxyadenosine + L-methionine + A + S-adenosyl-L-homocysteine + 2 H(+). Its function is as follows. Catalyzes the methylthiolation of an aspartic acid residue of ribosomal protein uS12. In Sorangium cellulosum (strain So ce56) (Polyangium cellulosum (strain So ce56)), this protein is Ribosomal protein uS12 methylthiotransferase RimO.